The chain runs to 330 residues: Anthranilate phosphoribosyltransferase (330 aa).

5-phospho-alpha-D-ribose 1-diphosphate-binding positions include G79, 82 to 83 (GD), T87, 89 to 92 (NIST), 107 to 115 (KHGNYGVSS), and S119. Position 79 (G79) interacts with anthranilate. S91 contacts Mg(2+). N110 contacts anthranilate. R165 is an anthranilate binding site. 2 residues coordinate Mg(2+): D223 and E224.

Belongs to the anthranilate phosphoribosyltransferase family. Homodimer. Requires Mg(2+) as cofactor.

The catalysed reaction is N-(5-phospho-beta-D-ribosyl)anthranilate + diphosphate = 5-phospho-alpha-D-ribose 1-diphosphate + anthranilate. It functions in the pathway amino-acid biosynthesis; L-tryptophan biosynthesis; L-tryptophan from chorismate: step 2/5. Catalyzes the transfer of the phosphoribosyl group of 5-phosphorylribose-1-pyrophosphate (PRPP) to anthranilate to yield N-(5'-phosphoribosyl)-anthranilate (PRA). The sequence is that of Anthranilate phosphoribosyltransferase from Flavobacterium johnsoniae (strain ATCC 17061 / DSM 2064 / JCM 8514 / BCRC 14874 / CCUG 350202 / NBRC 14942 / NCIMB 11054 / UW101) (Cytophaga johnsonae).